The following is a 335-amino-acid chain: Beta-ketoacyl-[acyl-carrier-protein] synthase III 3 (335 aa).

Catalysis depends on residues cysteine 114 and histidine 256. The segment at 257 to 261 (QANHR) is ACP-binding. Asparagine 286 is an active-site residue.

The protein belongs to the thiolase-like superfamily. FabH family. In terms of assembly, homodimer.

The protein resides in the cytoplasm. It catalyses the reaction malonyl-[ACP] + acetyl-CoA + H(+) = 3-oxobutanoyl-[ACP] + CO2 + CoA. Its pathway is lipid metabolism; fatty acid biosynthesis. Catalyzes the condensation reaction of fatty acid synthesis by the addition to an acyl acceptor of two carbons from malonyl-ACP. Catalyzes the first condensation reaction which initiates fatty acid synthesis and may therefore play a role in governing the total rate of fatty acid production. Possesses both acetoacetyl-ACP synthase and acetyl transacylase activities. Its substrate specificity determines the biosynthesis of branched-chain and/or straight-chain of fatty acids. In Streptomyces coelicolor (strain ATCC BAA-471 / A3(2) / M145), this protein is Beta-ketoacyl-[acyl-carrier-protein] synthase III 3.